Reading from the N-terminus, the 169-residue chain is Lachrymatory-factor synthase (169 aa).

Residues 1–12 constitute a propeptide that is removed on maturation; that stretch reads MELNPGAPAVVA. Catalysis depends on proton donor/acceptor residues Glu88 and Tyr102.

The protein resides in the vacuole. It carries out the reaction (E)-prop-1-en-1-SO-peroxol = (Z)-propanethial S-oxide. The enzyme catalyses (E)-alk-1-en-1-SO-peroxol = (Z)-alkanethial oxide. In terms of biological role, produces lacrymatory factor (propanthial S-oxide) from 1-propenylsulphenic acid, an unstable compound resulting from the degradation of trans-1-propenyl-L-cysteine sulphoxide (PRENCSO) by alliinase. The sequence is that of Lachrymatory-factor synthase from Allium cepa (Onion).